The chain runs to 56 residues: Large ribosomal subunit protein bL32 (56 aa).

Residues 1 to 37 (MAVQQNKPTRSKRGMRRSHDALTAPLLSVDKTSGETH) are disordered.

Belongs to the bacterial ribosomal protein bL32 family.

This is Large ribosomal subunit protein bL32 from Photorhabdus laumondii subsp. laumondii (strain DSM 15139 / CIP 105565 / TT01) (Photorhabdus luminescens subsp. laumondii).